A 453-amino-acid polypeptide reads, in one-letter code: Putative receptor-like protein kinase At2g30940 (453 aa).

Residues 60–80 form a helical membrane-spanning segment; sequence ASASIAFLLVLIISVLLCFIF. Threonine 155 carries the post-translational modification Phosphothreonine. Positions 166–428 constitute a Protein kinase domain; it reads FADDNVITKG…IHMLQPHDLL (263 aa). ATP contacts are provided by residues 172–180 and lysine 194; that span reads ITKGDSSTV. Tyrosine 240 is modified (phosphotyrosine). The active-site Proton acceptor is the aspartate 293. Position 297 is a phosphoserine (serine 297). Threonine 322 bears the Phosphothreonine mark.

Belongs to the protein kinase superfamily.

It localises to the cell membrane. The catalysed reaction is L-seryl-[protein] + ATP = O-phospho-L-seryl-[protein] + ADP + H(+). It carries out the reaction L-threonyl-[protein] + ATP = O-phospho-L-threonyl-[protein] + ADP + H(+). The protein is Putative receptor-like protein kinase At2g30940 of Arabidopsis thaliana (Mouse-ear cress).